A 149-amino-acid polypeptide reads, in one-letter code: Probable glycine-rich RNA-binding protein 1 (149 aa).

The RRM domain maps to 8-83 (YRCFVGGLAW…LDGRNITAQA (76 aa)). Residues 80–149 (TAQARGSGTR…GRSEGGSWRN (70 aa)) form a disordered region. 3 stretches are compositionally biased toward gly residues: residues 87 to 101 (GTRG…SGGY), 110 to 123 (YNRG…GGYG), and 131 to 143 (YGDG…GRSE).

This sequence belongs to the GR-RBP family.

Its function is as follows. Possibly has a role in RNA transcription or processing during stress. The polypeptide is Probable glycine-rich RNA-binding protein 1 (RBG1) (Arabidopsis thaliana (Mouse-ear cress)).